The sequence spans 280 residues: Ribonuclease Z (280 aa).

Residues His61, His63, Asp65, His66, His153, Asp176, and His240 each contribute to the Zn(2+) site. Asp65 serves as the catalytic Proton acceptor.

It belongs to the RNase Z family. Homodimer. It depends on Zn(2+) as a cofactor.

The enzyme catalyses Endonucleolytic cleavage of RNA, removing extra 3' nucleotides from tRNA precursor, generating 3' termini of tRNAs. A 3'-hydroxy group is left at the tRNA terminus and a 5'-phosphoryl group is left at the trailer molecule.. Its function is as follows. Zinc phosphodiesterase, which displays some tRNA 3'-processing endonuclease activity. Probably involved in tRNA maturation, by removing a 3'-trailer from precursor tRNA. The sequence is that of Ribonuclease Z from Mycobacterium avium (strain 104).